A 104-amino-acid chain; its full sequence is Pterin-4-alpha-carbinolamine dehydratase (104 aa).

Ala2 bears the N-acetylalanine mark. Residues 61–63 and 78–81 contribute to the substrate site; these read DHH and STHE.

Belongs to the pterin-4-alpha-carbinolamine dehydratase family. As to quaternary structure, homotetramer and homodimer. Heterotetramer with HNF1A; formed by a dimer of dimers. Interacts with HNF1B (via HNF-p1 domain); the interaction increases HNF1B transactivation activity.

It localises to the cytoplasm. Its subcellular location is the nucleus. It catalyses the reaction (4aS,6R)-4a-hydroxy-L-erythro-5,6,7,8-tetrahydrobiopterin = (6R)-L-erythro-6,7-dihydrobiopterin + H2O. In terms of biological role, involved in tetrahydrobiopterin biosynthesis. Seems to both prevent the formation of 7-pterins and accelerate the formation of quinonoid-BH2. Coactivator for HNF1A-dependent transcription. Regulates the dimerization of homeodomain protein HNF1A and enhances its transcriptional activity. Also acts as a coactivator for HNF1B-dependent transcription. In Rattus norvegicus (Rat), this protein is Pterin-4-alpha-carbinolamine dehydratase (Pcbd1).